Here is a 271-residue protein sequence, read N- to C-terminus: Probable esterase D14L (271 aa).

Serine 96 (nucleophile) is an active-site residue. Catalysis depends on residues aspartate 218 and histidine 247.

The protein belongs to the AB hydrolase superfamily. Component of an intracellular receptor complex involved in the detection of the smoke compound karrikin. In terms of tissue distribution, expressed constitutively in all organs (e.g. roots, stems, leaves, panicles and embryos).

It is found in the nucleus. The protein resides in the cytoplasm. Functionally, may be involved in strigolactone signaling pathway. Essential for plant responses to karrikins, a class of butenolide compounds, structurally similar to strigolactones, released from burning vegetation that stimulate seed germination and enhance seedling photomorphogenesis. Mediates a specific perception of karrikin. Required for the establishment of symbiosis with the arbuscular mycorrhizal fungi (AMF) Rhizophagus irregularis and Gigaspora rosea. Karrikin binding induces a conformational change. The protein is Probable esterase D14L (D14L) of Oryza sativa subsp. japonica (Rice).